Here is a 395-residue protein sequence, read N- to C-terminus: uncharacterized protein (395 aa).

10 helical membrane passes run 19 to 39 (IGIASLIGIVGGLSSVIIAII), 49 to 69 (VLLIPIVFFIAGLFVDYIYEL), 87 to 107 (LTWIRGLLKVLLAGAVIAVGG), 137 to 157 (LVIITGIAGGLGGAFSAPLGT), 172 to 192 (YINLIPPIIASVVGYLIFYLI), 206 to 226 (TINIHDFLLFILGAFFCSLIA), 252 to 272 (LIGGILVAVISYFIPEVMGMG), 279 to 299 (LFIMEFSLVFLVLLLIGKILA), 311 to 331 (GLVFPSMCIGAISGIIFGSLI), and 359 to 379 (VLCTEIFGFDFAVPASIGAVI).

It belongs to the chloride channel (TC 2.A.49) family.

Its subcellular location is the cell membrane. This is an uncharacterized protein from Methanocaldococcus jannaschii (strain ATCC 43067 / DSM 2661 / JAL-1 / JCM 10045 / NBRC 100440) (Methanococcus jannaschii).